A 329-amino-acid chain; its full sequence is GTPase Obg (329 aa).

The 159-residue stretch at Met1–Leu159 folds into the Obg domain. Positions Ala160–Glu328 constitute an OBG-type G domain. ATP is bound by residues Gly166–Ser173, Phe191–Ile195, Asp213–Gly216, Asn280–Glu283, and Ser309–Ile311. Mg(2+) is bound by residues Ser173 and Thr193.

This sequence belongs to the TRAFAC class OBG-HflX-like GTPase superfamily. OBG GTPase family. As to quaternary structure, monomer. Mg(2+) is required as a cofactor.

The protein resides in the cytoplasm. An essential GTPase which binds GTP, GDP and possibly (p)ppGpp with moderate affinity, with high nucleotide exchange rates and a fairly low GTP hydrolysis rate. Plays a role in control of the cell cycle, stress response, ribosome biogenesis and in those bacteria that undergo differentiation, in morphogenesis control. This chain is GTPase Obg, found in Prochlorococcus marinus (strain SARG / CCMP1375 / SS120).